The following is a 244-amino-acid chain: Thiol S-methyltransferase TMT1B (244 aa).

The N-terminal stretch at Met1–Ala23 is a signal peptide.

Belongs to the methyltransferase superfamily.

It is found in the endoplasmic reticulum membrane. The protein resides in the lipid droplet. Its subcellular location is the microsome. The protein localises to the cytoplasm. It localises to the cytosol. The enzyme catalyses a thiol + S-adenosyl-L-methionine = a methyl thioether + S-adenosyl-L-homocysteine + H(+). In terms of biological role, thiol S-methyltransferase that catalyzes the transfer of a methyl group from S-adenosyl-L-methionine to alkyl and phenolic thiol-containing acceptor substrates. Together with TMT1B accounts for most of S-thiol methylation activity in the endoplasmic reticulum of hepatocytes. Selectively methylates S-centered nucleophiles from metabolites such as hydrogen sulfide and dithiothreitol. In Mus musculus (Mouse), this protein is Thiol S-methyltransferase TMT1B.